Reading from the N-terminus, the 615-residue chain is Dihydroxy-acid dehydratase (615 aa).

Aspartate 81 lines the Mg(2+) pocket. Cysteine 122 is a [2Fe-2S] cluster binding site. Residues aspartate 123 and lysine 124 each contribute to the Mg(2+) site. Residue lysine 124 is modified to N6-carboxylysine. Cysteine 193 contacts [2Fe-2S] cluster. Residue glutamate 489 participates in Mg(2+) binding. The Proton acceptor role is filled by serine 515.

The protein belongs to the IlvD/Edd family. In terms of assembly, homodimer. [2Fe-2S] cluster serves as cofactor. Requires Mg(2+) as cofactor.

The enzyme catalyses (2R)-2,3-dihydroxy-3-methylbutanoate = 3-methyl-2-oxobutanoate + H2O. The catalysed reaction is (2R,3R)-2,3-dihydroxy-3-methylpentanoate = (S)-3-methyl-2-oxopentanoate + H2O. It participates in amino-acid biosynthesis; L-isoleucine biosynthesis; L-isoleucine from 2-oxobutanoate: step 3/4. Its pathway is amino-acid biosynthesis; L-valine biosynthesis; L-valine from pyruvate: step 3/4. In terms of biological role, functions in the biosynthesis of branched-chain amino acids. Catalyzes the dehydration of (2R,3R)-2,3-dihydroxy-3-methylpentanoate (2,3-dihydroxy-3-methylvalerate) into 2-oxo-3-methylpentanoate (2-oxo-3-methylvalerate) and of (2R)-2,3-dihydroxy-3-methylbutanoate (2,3-dihydroxyisovalerate) into 2-oxo-3-methylbutanoate (2-oxoisovalerate), the penultimate precursor to L-isoleucine and L-valine, respectively. This is Dihydroxy-acid dehydratase from Pseudomonas savastanoi pv. phaseolicola (strain 1448A / Race 6) (Pseudomonas syringae pv. phaseolicola (strain 1448A / Race 6)).